Consider the following 175-residue polypeptide: Ribosome maturation factor RimM (175 aa).

The region spanning 99–172 (SIEFTWEHFI…KLTMIIPDGL (74 aa)) is the PRC barrel domain.

This sequence belongs to the RimM family. In terms of assembly, binds ribosomal protein uS19.

It localises to the cytoplasm. An accessory protein needed during the final step in the assembly of 30S ribosomal subunit, possibly for assembly of the head region. Essential for efficient processing of 16S rRNA. May be needed both before and after RbfA during the maturation of 16S rRNA. It has affinity for free ribosomal 30S subunits but not for 70S ribosomes. This Porphyromonas gingivalis (strain ATCC BAA-308 / W83) protein is Ribosome maturation factor RimM.